The primary structure comprises 36 residues: Protein YibY (36 aa).

This is Protein YibY from Escherichia coli (strain K12).